The primary structure comprises 348 residues: Phosphate acyltransferase (348 aa).

Belongs to the PlsX family. In terms of assembly, homodimer. Probably interacts with PlsY.

The protein localises to the cytoplasm. It catalyses the reaction a fatty acyl-[ACP] + phosphate = an acyl phosphate + holo-[ACP]. The protein operates within lipid metabolism; phospholipid metabolism. Catalyzes the reversible formation of acyl-phosphate (acyl-PO(4)) from acyl-[acyl-carrier-protein] (acyl-ACP). This enzyme utilizes acyl-ACP as fatty acyl donor, but not acyl-CoA. The polypeptide is Phosphate acyltransferase (Lactiplantibacillus plantarum (strain ATCC BAA-793 / NCIMB 8826 / WCFS1) (Lactobacillus plantarum)).